The following is a 64-amino-acid chain: Epidermal growth factor (64 aa).

An N-terminal signal peptide occupies residues 1 to 21 (MMRHLLLVGAAILIFVSDAQA). A Pyrrolidone carboxylic acid modification is found at glutamine 22. In terms of domain architecture, EGF-like spans 25–61 (GEDPCQIVRCSYGANCIAYGDTAICECPFGYSGIRCQ). Cystine bridges form between cysteine 29–cysteine 40, cysteine 34–cysteine 49, and cysteine 51–cysteine 60.

Albumen gland. Up-regulated in adult CNS after axotomy.

It is found in the secreted. Its function is as follows. Induces neurite outgrowth in specific adult neurons in vitro. In Lymnaea stagnalis (Great pond snail), this protein is Epidermal growth factor.